Here is a 134-residue protein sequence, read N- to C-terminus: Nogalonic acid methyl ester cyclase (134 aa).

Gln-95 provides a ligand contact to nogalaviketone. The active-site Proton donor/acceptor is Asp-111.

This sequence belongs to the polyketide cyclase DnrD family. Homotetramer. Dimer of dimers.

The catalysed reaction is nogalaviketone = methyl nogalonate. It participates in antibiotic biosynthesis. Functionally, involved in the biosynthesis of the aromatic polyketide antibiotic nogalamycin. Catalyzes the formation of nogalaviketone from nogalonic acid methyl ester (NAME), the last ring-closure step in the biosynthesis of nogalamycin. The protein is Nogalonic acid methyl ester cyclase of Streptomyces nogalater.